Consider the following 214-residue polypeptide: Probable GTP-binding protein EngB (214 aa).

The region spanning 40 to 212 (SLPEIVFVGK…KASFAQCIKH (173 aa)) is the EngB-type G domain. GTP contacts are provided by residues 48 to 55 (GKSNVGKS), 75 to 79 (GRTRQ), 93 to 96 (DLPG), 160 to 163 (TKSD), and 191 to 193 (VSS). Serine 55 and threonine 77 together coordinate Mg(2+).

It belongs to the TRAFAC class TrmE-Era-EngA-EngB-Septin-like GTPase superfamily. EngB GTPase family. The cofactor is Mg(2+).

Functionally, necessary for normal cell division and for the maintenance of normal septation. In Rickettsia prowazekii (strain Madrid E), this protein is Probable GTP-binding protein EngB.